A 189-amino-acid polypeptide reads, in one-letter code: MRELKILVVNNYGQFCHLIHRAVRDLDMDTKIIPNVTPIEDILAEEPDGLILSGGPEMERAGLCFDYVREIDIPILGICLGHQAIALAYGGHVHSGKKGGYAEIEIEVIEEDDILRGLGPKITVWASHADEVAILPEGFIHLARSDICEIEAMRHPTKPIYGVQWHPEVSHTKKGDELLTNFFEVCDRY.

The 185-residue stretch at 5–189 folds into the Glutamine amidotransferase type-1 domain; that stretch reads KILVVNNYGQ…TNFFEVCDRY (185 aa). C79 functions as the Nucleophile in the catalytic mechanism. Residues H166 and E168 contribute to the active site.

Heterodimer composed of a glutamine amidotransferase subunit (A) and a GMP-binding subunit (B).

It carries out the reaction XMP + L-glutamine + ATP + H2O = GMP + L-glutamate + AMP + diphosphate + 2 H(+). It participates in purine metabolism; GMP biosynthesis; GMP from XMP (L-Gln route): step 1/1. Functionally, catalyzes the synthesis of GMP from XMP. The sequence is that of GMP synthase [glutamine-hydrolyzing] subunit A from Methanosarcina acetivorans (strain ATCC 35395 / DSM 2834 / JCM 12185 / C2A).